The sequence spans 739 residues: Protein kinase C (739 aa).

The C2 domain maps to 1–117; it reads MFTGKLQIKV…SETAVQDLWV (117 aa). Phorbol-ester/DAG-type zinc fingers lie at residues 176–226 and 251–301; these read GHKF…VSKC and PHRF…ANTC. In terms of domain architecture, Protein kinase spans 408–665; sequence FNFIKVLGKG…ENEIRKHPFF (258 aa). ATP is bound by residues 414–422 and Lys437; that span reads LGKGSFGKV. The Proton acceptor role is filled by Asp532. Positions 666 to 737 constitute an AGC-kinase C-terminal domain; sequence AKLDWKELEK…VNPKFGPERK (72 aa).

Belongs to the protein kinase superfamily. AGC Ser/Thr protein kinase family. PKC subfamily.

The enzyme catalyses L-seryl-[protein] + ATP = O-phospho-L-seryl-[protein] + ADP + H(+). It carries out the reaction L-threonyl-[protein] + ATP = O-phospho-L-threonyl-[protein] + ADP + H(+). PKC is activated by diacylglycerol which in turn phosphorylates a range of cellular proteins. PKC also serves as the receptor for phorbol esters, a class of tumor promoters. This Drosophila melanogaster (Fruit fly) protein is Protein kinase C (Pkc98E).